Here is a 367-residue protein sequence, read N- to C-terminus: tRNA-specific 2-thiouridylase MnmA (367 aa).

Residues 12-19 (GMSGGVDS) and M38 each bind ATP. Residues 98 to 100 (NPD) are interaction with target base in tRNA. C103 serves as the catalytic Nucleophile. The cysteines at positions 103 and 200 are disulfide-linked. Residue G128 participates in ATP binding. The interval 150–152 (KDQ) is interaction with tRNA. The active-site Cysteine persulfide intermediate is the C200. The interval 312–313 (RY) is interaction with tRNA.

It belongs to the MnmA/TRMU family. Interacts with TusE.

It is found in the cytoplasm. It catalyses the reaction S-sulfanyl-L-cysteinyl-[protein] + uridine(34) in tRNA + AH2 + ATP = 2-thiouridine(34) in tRNA + L-cysteinyl-[protein] + A + AMP + diphosphate + H(+). Functionally, catalyzes the 2-thiolation of uridine at the wobble position (U34) of tRNA(Lys), tRNA(Glu) and tRNA(Gln), leading to the formation of s(2)U34, the first step of tRNA-mnm(5)s(2)U34 synthesis. Sulfur is provided by IscS, via a sulfur-relay system. Binds ATP and its substrate tRNAs. The chain is tRNA-specific 2-thiouridylase MnmA from Blochmanniella pennsylvanica (strain BPEN).